Here is a 1318-residue protein sequence, read N- to C-terminus: Major tegument protein (1318 aa).

Belongs to the herpesviridae MTP family. As to quaternary structure, interacts with host DAXX; this interaction disrupts the chromatin remodeling complex ATRX:DAXX and thus allows viral transcription. Interacts with host SMC6; this interaction targets SMC5-SMC6 complex for proteasomal degradation.

It localises to the virion tegument. The protein localises to the host nucleus. Functionally, tegument protein that plays a role in the inhibition of host intrinsic defenses to promote viral early gene activation. Interacts with host DAXX and thereby disrupts the complex between DAXX and ATRX. Suppresses the DAXX-ATRX dependent deposition of histone H3.3 on viral chromatin allowing viral transcription. Targets also host SMC5/6 for proteasomal degradation in a CUL7 and calpain-dependent manner to support nuclear membrane-less replication compartment formation and lytic virus replication. The polypeptide is Major tegument protein (Homo sapiens (Human)).